The primary structure comprises 131 residues: Snaclec A13 (131 aa).

Disulfide bonds link Cys-4–Cys-15, Cys-32–Cys-125, and Cys-100–Cys-117. The 116-residue stretch at 11–126 folds into the C-type lectin domain; that stretch reads YEGHCYKVFN…CELAYHFICM (116 aa).

Belongs to the snaclec family. Heterodimer; disulfide-linked. Expressed by the venom gland.

The protein resides in the secreted. Functionally, interferes with one step of hemostasis (modulation of platelet aggregation, or coagulation cascade, for example). The sequence is that of Snaclec A13 from Macrovipera lebetinus (Levantine viper).